Consider the following 192-residue polypeptide: uncharacterized protein (192 aa).

The region spanning 29–160 (HRQAAVLIPI…PLDIYRRGDS (132 aa)) is the Nudix hydrolase domain. The Nudix box signature appears at 67 to 89 (GAVDDTDASVIAAALREAEEEVA). Residues glutamate 83 and glutamate 87 each coordinate Mg(2+).

This sequence belongs to the Nudix hydrolase family. PCD1 subfamily. The cofactor is Mn(2+). Requires Mg(2+) as cofactor.

In terms of biological role, probably mediates the hydrolysis of some nucleoside diphosphate derivatives. This is an uncharacterized protein from Shigella sonnei (strain Ss046).